The following is a 280-amino-acid chain: Putative pyruvate, phosphate dikinase regulatory protein (280 aa).

154 to 161 (GVSRTSKT) provides a ligand contact to ADP.

The protein belongs to the pyruvate, phosphate/water dikinase regulatory protein family. PDRP subfamily.

It carries out the reaction N(tele)-phospho-L-histidyl/L-threonyl-[pyruvate, phosphate dikinase] + ADP = N(tele)-phospho-L-histidyl/O-phospho-L-threonyl-[pyruvate, phosphate dikinase] + AMP + H(+). The enzyme catalyses N(tele)-phospho-L-histidyl/O-phospho-L-threonyl-[pyruvate, phosphate dikinase] + phosphate + H(+) = N(tele)-phospho-L-histidyl/L-threonyl-[pyruvate, phosphate dikinase] + diphosphate. Bifunctional serine/threonine kinase and phosphorylase involved in the regulation of the pyruvate, phosphate dikinase (PPDK) by catalyzing its phosphorylation/dephosphorylation. In Nitrobacter winogradskyi (strain ATCC 25391 / DSM 10237 / CIP 104748 / NCIMB 11846 / Nb-255), this protein is Putative pyruvate, phosphate dikinase regulatory protein.